Consider the following 550-residue polypeptide: Hydroxylamine reductase (550 aa).

Residues Cys-3, Cys-6, Cys-18, and Cys-25 each coordinate [2Fe-2S] cluster. 8 residues coordinate hybrid [4Fe-2O-2S] cluster: His-249, Glu-273, Cys-317, Cys-405, Cys-433, Cys-458, Glu-492, and Lys-494. Cys-405 is subject to Cysteine persulfide.

The protein belongs to the HCP family. [2Fe-2S] cluster serves as cofactor. The cofactor is hybrid [4Fe-2O-2S] cluster.

It localises to the cytoplasm. It catalyses the reaction A + NH4(+) + H2O = hydroxylamine + AH2 + H(+). Catalyzes the reduction of hydroxylamine to form NH(3) and H(2)O. This Yersinia pseudotuberculosis serotype IB (strain PB1/+) protein is Hydroxylamine reductase.